Here is a 66-residue protein sequence, read N- to C-terminus: Large ribosomal subunit protein bL35 (66 aa).

Belongs to the bacterial ribosomal protein bL35 family.

This Synechococcus sp. (strain ATCC 27144 / PCC 6301 / SAUG 1402/1) (Anacystis nidulans) protein is Large ribosomal subunit protein bL35.